Reading from the N-terminus, the 201-residue chain is Recombination protein RecR (201 aa).

The C4-type zinc finger occupies 57 to 72 (CADCRTFTEQEVCNIC). Positions 81–176 (GQICVVESPA…EASRIAHGVP (96 aa)) constitute a Toprim domain.

The protein belongs to the RecR family.

May play a role in DNA repair. It seems to be involved in an RecBC-independent recombinational process of DNA repair. It may act with RecF and RecO. This is Recombination protein RecR from Escherichia coli O6:K15:H31 (strain 536 / UPEC).